The following is a 571-amino-acid chain: Glutamate--tRNA ligase (571 aa).

The 'HIGH' region signature appears at 110–120 (PNPNGPATLGS).

It belongs to the class-I aminoacyl-tRNA synthetase family. Glutamate--tRNA ligase type 2 subfamily.

It is found in the cytoplasm. The catalysed reaction is tRNA(Glu) + L-glutamate + ATP = L-glutamyl-tRNA(Glu) + AMP + diphosphate. Its function is as follows. Catalyzes the attachment of glutamate to tRNA(Glu) in a two-step reaction: glutamate is first activated by ATP to form Glu-AMP and then transferred to the acceptor end of tRNA(Glu). The polypeptide is Glutamate--tRNA ligase (Methanosarcina barkeri (strain Fusaro / DSM 804)).